A 423-amino-acid polypeptide reads, in one-letter code: Serine--tRNA ligase (423 aa).

Composition is skewed to basic and acidic residues over residues 1 to 24 (MIDL…RGED) and 62 to 71 (KMRDASPEEK). The segment at 1 to 71 (MIDLKQLRDD…KMRDASPEEK (71 aa)) is disordered. 230–232 (TSE) contacts L-serine. Residues 261-263 (RRE) and V277 each bind ATP. Residue E284 coordinates L-serine. 348–351 (ELTS) serves as a coordination point for ATP. T383 provides a ligand contact to L-serine.

It belongs to the class-II aminoacyl-tRNA synthetase family. Type-1 seryl-tRNA synthetase subfamily. In terms of assembly, homodimer. The tRNA molecule binds across the dimer.

The protein localises to the cytoplasm. It catalyses the reaction tRNA(Ser) + L-serine + ATP = L-seryl-tRNA(Ser) + AMP + diphosphate + H(+). It carries out the reaction tRNA(Sec) + L-serine + ATP = L-seryl-tRNA(Sec) + AMP + diphosphate + H(+). It participates in aminoacyl-tRNA biosynthesis; selenocysteinyl-tRNA(Sec) biosynthesis; L-seryl-tRNA(Sec) from L-serine and tRNA(Sec): step 1/1. In terms of biological role, catalyzes the attachment of serine to tRNA(Ser). Is also able to aminoacylate tRNA(Sec) with serine, to form the misacylated tRNA L-seryl-tRNA(Sec), which will be further converted into selenocysteinyl-tRNA(Sec). The sequence is that of Serine--tRNA ligase from Corynebacterium kroppenstedtii (strain DSM 44385 / JCM 11950 / CIP 105744 / CCUG 35717).